We begin with the raw amino-acid sequence, 232 residues long: 2-C-methyl-D-erythritol 4-phosphate cytidylyltransferase (232 aa).

The protein belongs to the IspD/TarI cytidylyltransferase family. IspD subfamily.

The enzyme catalyses 2-C-methyl-D-erythritol 4-phosphate + CTP + H(+) = 4-CDP-2-C-methyl-D-erythritol + diphosphate. It functions in the pathway isoprenoid biosynthesis; isopentenyl diphosphate biosynthesis via DXP pathway; isopentenyl diphosphate from 1-deoxy-D-xylulose 5-phosphate: step 2/6. Its function is as follows. Catalyzes the formation of 4-diphosphocytidyl-2-C-methyl-D-erythritol from CTP and 2-C-methyl-D-erythritol 4-phosphate (MEP). The sequence is that of 2-C-methyl-D-erythritol 4-phosphate cytidylyltransferase from Shewanella frigidimarina (strain NCIMB 400).